Here is a 361-residue protein sequence, read N- to C-terminus: Chorismate synthase (361 aa).

NADP(+)-binding residues include Arg48 and Arg54. FMN-binding positions include 125–127, 238–239, Gly278, 293–297, and Arg319; these read RSS, NA, and KPTSS.

It belongs to the chorismate synthase family. Homotetramer. FMNH2 serves as cofactor.

The enzyme catalyses 5-O-(1-carboxyvinyl)-3-phosphoshikimate = chorismate + phosphate. It participates in metabolic intermediate biosynthesis; chorismate biosynthesis; chorismate from D-erythrose 4-phosphate and phosphoenolpyruvate: step 7/7. Functionally, catalyzes the anti-1,4-elimination of the C-3 phosphate and the C-6 proR hydrogen from 5-enolpyruvylshikimate-3-phosphate (EPSP) to yield chorismate, which is the branch point compound that serves as the starting substrate for the three terminal pathways of aromatic amino acid biosynthesis. This reaction introduces a second double bond into the aromatic ring system. In Photorhabdus laumondii subsp. laumondii (strain DSM 15139 / CIP 105565 / TT01) (Photorhabdus luminescens subsp. laumondii), this protein is Chorismate synthase.